A 637-amino-acid polypeptide reads, in one-letter code: MSTLLDTITCPADLKKIPRDQLPALAEEIRAFLLETVSRTGGHLASNLGVVELSIALHYCFDSPTDRFVWDVGHQAYTHKILTGRRDRFHTQRQYGGISGFPKRSESSHDAFDTGHSSTSISAGLGMAMARELRGGSNKVVAVIGDGSMTGGIAFEALNQAGHLKKNLIVVLNDNEMSISPNVGAFSSFVSRKLTGSYFRELKKEVQGLLQNIPAIGKDILQFARRAENSLKGFLTPGMLFEALGFDYIGPIQGHNLPQLLEVFENARGLDGPVVVHVMTTKGKGYVPAETNPSAFHGVGPFDVATGKTTGSKPGAASYTGIFGDTLAQLARENEKIVAITAAMPDGTGLTGFAKEFPERFFDVGIAEQHAVTFAAGLAAEGFRPVTAIYSTFLQRAYDQVFHDVCLQNLPVVFALDRGGVVGDDGPTHHGVFDLSYLRHLPGMTLMAPKDENELRHMLKTAVSHDGPIALRYPRGAGCGIPLDQELREIPIGTGEILAEGDDVAIIAIGITVLPALEAARTLAEKGIRATVINARFVKPLDREMILQAARRTGCIITAEENALQGGFGSAVLELLADEGMTGVRVKRLGIPDRFVEQGPQPQLRADLGIDAAGIAAATEAFLAAKGAPAPALSMVK.

Thiamine diphosphate is bound by residues His-74 and 115 to 117 (GHS). Asp-146 serves as a coordination point for Mg(2+). Residues 147 to 148 (GS), Asn-175, Tyr-286, and Glu-368 each bind thiamine diphosphate. Asn-175 contributes to the Mg(2+) binding site.

The protein belongs to the transketolase family. DXPS subfamily. In terms of assembly, homodimer. The cofactor is Mg(2+). Requires thiamine diphosphate as cofactor.

The catalysed reaction is D-glyceraldehyde 3-phosphate + pyruvate + H(+) = 1-deoxy-D-xylulose 5-phosphate + CO2. It participates in metabolic intermediate biosynthesis; 1-deoxy-D-xylulose 5-phosphate biosynthesis; 1-deoxy-D-xylulose 5-phosphate from D-glyceraldehyde 3-phosphate and pyruvate: step 1/1. Functionally, catalyzes the acyloin condensation reaction between C atoms 2 and 3 of pyruvate and glyceraldehyde 3-phosphate to yield 1-deoxy-D-xylulose-5-phosphate (DXP). The polypeptide is 1-deoxy-D-xylulose-5-phosphate synthase 1 (Geobacter sulfurreducens (strain ATCC 51573 / DSM 12127 / PCA)).